The sequence spans 217 residues: Probable transaldolase (217 aa).

The Schiff-base intermediate with substrate role is filled by lysine 85.

This sequence belongs to the transaldolase family. Type 3B subfamily.

It is found in the cytoplasm. It carries out the reaction D-sedoheptulose 7-phosphate + D-glyceraldehyde 3-phosphate = D-erythrose 4-phosphate + beta-D-fructose 6-phosphate. Its pathway is carbohydrate degradation; pentose phosphate pathway; D-glyceraldehyde 3-phosphate and beta-D-fructose 6-phosphate from D-ribose 5-phosphate and D-xylulose 5-phosphate (non-oxidative stage): step 2/3. Its function is as follows. Transaldolase is important for the balance of metabolites in the pentose-phosphate pathway. This chain is Probable transaldolase, found in Lachnoclostridium phytofermentans (strain ATCC 700394 / DSM 18823 / ISDg) (Clostridium phytofermentans).